The sequence spans 157 residues: SsrA-binding protein (157 aa).

This sequence belongs to the SmpB family.

It is found in the cytoplasm. Its function is as follows. Required for rescue of stalled ribosomes mediated by trans-translation. Binds to transfer-messenger RNA (tmRNA), required for stable association of tmRNA with ribosomes. tmRNA and SmpB together mimic tRNA shape, replacing the anticodon stem-loop with SmpB. tmRNA is encoded by the ssrA gene; the 2 termini fold to resemble tRNA(Ala) and it encodes a 'tag peptide', a short internal open reading frame. During trans-translation Ala-aminoacylated tmRNA acts like a tRNA, entering the A-site of stalled ribosomes, displacing the stalled mRNA. The ribosome then switches to translate the ORF on the tmRNA; the nascent peptide is terminated with the 'tag peptide' encoded by the tmRNA and targeted for degradation. The ribosome is freed to recommence translation, which seems to be the essential function of trans-translation. This Limosilactobacillus fermentum (strain NBRC 3956 / LMG 18251) (Lactobacillus fermentum) protein is SsrA-binding protein.